Consider the following 427-residue polypeptide: Probable fatty acid methyltransferase Rv3720 (427 aa).

Residues 167–168, 202–210, and 227–232 each bind S-adenosyl-L-methionine; these read YT, LLDVGCGWG, and TLSAEQ.

It belongs to the CFA/CMAS family.

Functionally, may be a S-adenosylmethionine-dependent methyltransferase involved in fatty acid metabolism. The protein is Probable fatty acid methyltransferase Rv3720 of Mycobacterium tuberculosis (strain ATCC 25618 / H37Rv).